A 199-amino-acid chain; its full sequence is NADH-quinone oxidoreductase subunit C (199 aa).

The protein belongs to the complex I 30 kDa subunit family. As to quaternary structure, NDH-1 is composed of 14 different subunits. Subunits NuoB, C, D, E, F, and G constitute the peripheral sector of the complex.

It localises to the cell inner membrane. It catalyses the reaction a quinone + NADH + 5 H(+)(in) = a quinol + NAD(+) + 4 H(+)(out). Functionally, NDH-1 shuttles electrons from NADH, via FMN and iron-sulfur (Fe-S) centers, to quinones in the respiratory chain. The immediate electron acceptor for the enzyme in this species is believed to be ubiquinone. Couples the redox reaction to proton translocation (for every two electrons transferred, four hydrogen ions are translocated across the cytoplasmic membrane), and thus conserves the redox energy in a proton gradient. The polypeptide is NADH-quinone oxidoreductase subunit C (Rhodobacter capsulatus (Rhodopseudomonas capsulata)).